A 307-amino-acid polypeptide reads, in one-letter code: Probable thioesterase KK1J (307 aa).

Belongs to the AMT4 thioesterase family.

It participates in secondary metabolite biosynthesis. Functionally, probable thioesterase; part of the gene cluster that mediates the biosynthesis of KK-1, a novel cyclic depsipeptide with 10 residues which is a promising active compound with high activity against many plant pathogens, especially Botrytis cinerea. Within the pathway, kk1J is not essential for the biosynthesis of KK-1, but plays a role for efficient production via correction of peptide chain synthesis by kk1B. The nonribosomal peptide synthetase (NRPS) kk1B catalyzes the elongation and cyclization of the decapeptide chain composed of 1 D-lactic acid residue (D-Lac), 1 pipecolic acid residue (Pip), 1 aspartic acid residue (Asp), 1 isoleucine residue (Ile), 1 glycine residue (Gly), 1 tyrosine residue (Tyr) and 4 valine residues (Val). The Asp, Ile and 3 Val residues are N-methylated by the 5 methyltransferase domains from the NRPS (found in modules 3, 5, 6, 7 and 9), whereas the Tyr residue is O-methylated by the cluster encoded O-methyltransferase kk1A. The thioesterase kk1J is likely to be involved in the corrective mechanism of peptide chain synthesis. The D-lactate dehydrogenase kk1H is involved in the synthesis of D-lactic acid from pyruvic acid, which is recognized by the A domain of the first kk1B module. The pyrroline-5-carboxylate reductase kk1I is involved in the synthesis of the L-pipecolic acid residue of KK-1 from delta-1-pyrroline-5-carboxylate (P5C), a metabolic intermediate of lysine. It still is unclear how kk1C and kk1D are involved in the production of KK-1. This Curvularia clavata protein is Probable thioesterase KK1J.